The primary structure comprises 352 residues: Peptide chain release factor 1 (352 aa).

Q229 bears the N5-methylglutamine mark.

Belongs to the prokaryotic/mitochondrial release factor family. Methylated by PrmC. Methylation increases the termination efficiency of RF1.

It is found in the cytoplasm. Peptide chain release factor 1 directs the termination of translation in response to the peptide chain termination codons UAG and UAA. This is Peptide chain release factor 1 from Granulibacter bethesdensis (strain ATCC BAA-1260 / CGDNIH1).